Here is a 197-residue protein sequence, read N- to C-terminus: Pinin homolog 1 (197 aa).

Positions 30–73 (LDGKVNNEDSHMEIDQPEGSMEEDDHRQVKEKNTSENSVEQKRG) are disordered. Basic and acidic residues-rich tracts occupy residues 34–43 (VNNEDSHMEI) and 53–71 (DDHR…VEQK).

It belongs to the pinin family.

It localises to the nucleus. Its subcellular location is the cytoplasm. Transcriptional activator that may participate in the regulation of mRNA splicing. The polypeptide is Pinin homolog 1 (pnn1) (Schizosaccharomyces pombe (strain 972 / ATCC 24843) (Fission yeast)).